A 99-amino-acid polypeptide reads, in one-letter code: Plastocyanin (99 aa).

Positions 1-99 (VEVLMGGSGG…IGMSGIVTVN (99 aa)) constitute a Plastocyanin-like domain. Cu cation-binding residues include histidine 37, cysteine 84, histidine 87, and methionine 92.

This sequence belongs to the plastocyanin family. Cu(2+) is required as a cofactor.

It is found in the plastid. It localises to the chloroplast thylakoid membrane. Participates in electron transfer between P700 and the cytochrome b6-f complex in photosystem I. The polypeptide is Plastocyanin (PETE) (Ginkgo biloba (Ginkgo)).